We begin with the raw amino-acid sequence, 255 residues long: Flagellar L-ring protein (255 aa).

An N-terminal signal peptide occupies residues 1–25; the sequence is MRRHSTRKTVARVAVVALAVGVLAG. Cysteine 26 is lipidated: N-palmitoyl cysteine. Residue cysteine 26 is the site of S-diacylglycerol cysteine attachment.

The protein belongs to the FlgH family. In terms of assembly, the basal body constitutes a major portion of the flagellar organelle and consists of four rings (L,P,S, and M) mounted on a central rod.

Its subcellular location is the cell outer membrane. It is found in the bacterial flagellum basal body. Its function is as follows. Assembles around the rod to form the L-ring and probably protects the motor/basal body from shearing forces during rotation. This chain is Flagellar L-ring protein, found in Rhodospirillum rubrum (strain ATCC 11170 / ATH 1.1.1 / DSM 467 / LMG 4362 / NCIMB 8255 / S1).